Consider the following 345-residue polypeptide: MTYFPPAAEICDSPRHDWSIPEVLALFELPFVELIYRAQTVHRQHFNPNQVQMSTLLSIKTGGCPEDCAYCPQSVRYSTPVKAEPLLPLEEVLTAARNAKARGASRFCMGAAWRRLKERELEPVAKMITEVKALGLETCVTLGMLGPGQAERLKAAGLDYYNHNLDTSPEFYGEIITTRTYQDRLETLSQVREAGIHVCCGGIVGMGEERSDRAGLLANLANLPRHPESVPINRLVQVEGTPLAGAPELDPFEFVRTVACARILMPASFVRLSAGRETMSDELQALCFLAGANSIFYGEKLLTTPNPTTDHDQQLFERLGLELLFPQAQVAAPVPEADEVGSASG.

Positions 49–276 constitute a Radical SAM core domain; the sequence is NQVQMSTLLS…ASFVRLSAGR (228 aa). [4Fe-4S] cluster-binding residues include Cys64, Cys68, and Cys71. [2Fe-2S] cluster contacts are provided by Cys108, Cys139, Cys199, and Arg271.

This sequence belongs to the radical SAM superfamily. Biotin synthase family. In terms of assembly, homodimer. [4Fe-4S] cluster is required as a cofactor. It depends on [2Fe-2S] cluster as a cofactor.

It catalyses the reaction (4R,5S)-dethiobiotin + (sulfur carrier)-SH + 2 reduced [2Fe-2S]-[ferredoxin] + 2 S-adenosyl-L-methionine = (sulfur carrier)-H + biotin + 2 5'-deoxyadenosine + 2 L-methionine + 2 oxidized [2Fe-2S]-[ferredoxin]. It functions in the pathway cofactor biosynthesis; biotin biosynthesis; biotin from 7,8-diaminononanoate: step 2/2. Catalyzes the conversion of dethiobiotin (DTB) to biotin by the insertion of a sulfur atom into dethiobiotin via a radical-based mechanism. The chain is Biotin synthase from Nitrosococcus oceani (strain ATCC 19707 / BCRC 17464 / JCM 30415 / NCIMB 11848 / C-107).